Reading from the N-terminus, the 268-residue chain is Transcription initiation factor TFIID subunit 14b (268 aa).

The segment covering 1–20 (MTNSSSSKKQAQDQPETSEP) has biased composition (polar residues). Residues 1–36 (MTNSSSSKKQAQDQPETSEPTLKSLKTKMTKSDEKQ) are disordered. The YEATS domain occupies 38–182 (KLKDIEISVP…ESFLARVQNH (145 aa)). Positions 229–263 (DELLQLAAARQQVQAHIAKLRRQISLLEGQNQTVK) form a coiled coil.

Belongs to the YAF9 family. Component of the TFIID complex. TFIID is composed of TATA binding protein (TBP) and a number of TBP-associated factors (TAFs) whose MWs range from 14-217 kDa. Interacts with TAF1, TAF4B and TAF12B. Component of the SWR1 chromatin-remodeling complex. Interacts with FLX, a component of the transcription activator complex FRI-C. Interacts with SWC4, and with EAF1A and EAF1B (via HSA domain). In terms of tissue distribution, expressed in roots, leaves, inflorescence and flowering tissues.

It is found in the cytoplasm. The protein resides in the nucleus. In terms of biological role, negative regulator of flowering controlling the H4K5 acetylation levels in the FLC and FT chromatin. Positively regulates FLC expression. Component of the transcription factor IID (TFIID) complex that is essential for mediating regulation of RNA polymerase transcription. Component of the SWR1 complex which mediates the ATP-dependent exchange of histone H2A for the H2A variant HZT1 leading to transcriptional regulation of selected genes by chromatin remodeling. Component of a NuA4 histone acetyltransferase complex which is involved in transcriptional activation of selected genes principally by acetylation of nucleosomal histones H4 and H2A. The protein is Transcription initiation factor TFIID subunit 14b of Arabidopsis thaliana (Mouse-ear cress).